We begin with the raw amino-acid sequence, 183 residues long: Putative ribosomal N-acetyltransferase YdaF (183 aa).

The N-acetyltransferase domain occupies 10 to 176 (ITIRLLEPKD…HDLVYYSLLK (167 aa)).

Belongs to the acetyltransferase family. Homohexamer, and homodimer.

Putative N-acetyltransferase. May act on ribosomal proteins (Potential). This chain is Putative ribosomal N-acetyltransferase YdaF (ydaF), found in Bacillus subtilis (strain 168).